We begin with the raw amino-acid sequence, 201 residues long: Small ribosomal subunit protein uS4 (201 aa).

In terms of domain architecture, S4 RNA-binding spans 91-151; it reads SRLDNVVYRA…DKSINTLPFE (61 aa).

It belongs to the universal ribosomal protein uS4 family. Part of the 30S ribosomal subunit. Contacts protein S5. The interaction surface between S4 and S5 is involved in control of translational fidelity.

One of the primary rRNA binding proteins, it binds directly to 16S rRNA where it nucleates assembly of the body of the 30S subunit. Its function is as follows. With S5 and S12 plays an important role in translational accuracy. The sequence is that of Small ribosomal subunit protein uS4 from Mycolicibacterium gilvum (strain PYR-GCK) (Mycobacterium gilvum (strain PYR-GCK)).